Consider the following 248-residue polypeptide: Mannose-binding protein C (248 aa).

An N-terminal signal peptide occupies residues 1–20 (MSLFPSLPLLLLSMVAASYS). Positions 42-99 (GINGFPGKDGRDGTKGEKGEPGQGLRGLQGPPGKLGPPGNPGPSGSPGPKGQKGDPGK) constitute a Collagen-like domain. Residues 43-113 (INGFPGKDGR…DSSLAASERK (71 aa)) form a disordered region. 4-hydroxyproline is present on Pro47. Over residues 49–61 (KDGRDGTKGEKGE) the composition is skewed to basic and acidic residues. Residues Pro73, Pro79, Pro82, and Pro88 each carry the 4-hydroxyproline modification. The segment covering 75–87 (KLGPPGNPGPSGS) has biased composition (pro residues). Positions 93–102 (QKGDPGKSPD) are enriched in basic and acidic residues. Residues 112 to 130 (RKALQTEMARIKKWLTFSL) are a coiled coil. The region spanning 134–245 (VGNKFFLTNG…CSTSHLAVCE (112 aa)) is the C-type lectin domain. Intrachain disulfides connect Cys155–Cys244 and Cys222–Cys236.

In terms of assembly, oligomeric complex of 3 or more homotrimers. Interacts with MASP1 and MASP2. Interacts with MEP1A and MEP1B and may inhibit their catalytic activity. Post-translationally, hydroxylation on proline residues within the sequence motif, GXPG, is most likely to be 4-hydroxy as this fits the requirement for 4-hydroxylation in vertebrates.

Its subcellular location is the secreted. Its function is as follows. Calcium-dependent lectin involved in innate immune defense. Binds mannose, fucose and N-acetylglucosamine on different microorganisms and activates the lectin complement pathway. Binds to late apoptotic cells, as well as to apoptotic blebs and to necrotic cells, but not to early apoptotic cells, facilitating their uptake by macrophages. This chain is Mannose-binding protein C (MBL2), found in Gorilla gorilla gorilla (Western lowland gorilla).